A 518-amino-acid polypeptide reads, in one-letter code: GMP synthase [glutamine-hydrolyzing] (518 aa).

Residues 13–203 (KIIVLDFGSQ…ALNVCGCKGD (191 aa)) enclose the Glutamine amidotransferase type-1 domain. Catalysis depends on Cys90, which acts as the Nucleophile. Active-site residues include His177 and Glu179. The region spanning 204–393 (WTMENFSEVE…LGMPDAIVWR (190 aa)) is the GMPS ATP-PPase domain. An ATP-binding site is contributed by 231–237 (SGGVDSS).

Homodimer.

The enzyme catalyses XMP + L-glutamine + ATP + H2O = GMP + L-glutamate + AMP + diphosphate + 2 H(+). It participates in purine metabolism; GMP biosynthesis; GMP from XMP (L-Gln route): step 1/1. Its function is as follows. Catalyzes the synthesis of GMP from XMP. In Listeria monocytogenes serovar 1/2a (strain ATCC BAA-679 / EGD-e), this protein is GMP synthase [glutamine-hydrolyzing].